Consider the following 272-residue polypeptide: Putative phosphatase HI_0597 (272 aa).

Catalysis depends on aspartate 11, which acts as the Nucleophile. Position 11 (aspartate 11) interacts with Mg(2+). Leucine 12 contacts phosphate. Residue aspartate 13 participates in Mg(2+) binding. Phosphate contacts are provided by residues 45–46 (TG) and lysine 195. Aspartate 218 serves as a coordination point for Mg(2+). Position 221 (asparagine 221) interacts with phosphate.

The protein belongs to the HAD-like hydrolase superfamily. Cof family. Mg(2+) serves as cofactor.

This Haemophilus influenzae (strain ATCC 51907 / DSM 11121 / KW20 / Rd) protein is Putative phosphatase HI_0597.